A 293-amino-acid polypeptide reads, in one-letter code: tRNA-cytidine(32) 2-sulfurtransferase (293 aa).

Residues 62 to 67 (SGGKDS) carry the PP-loop motif motif. [4Fe-4S] cluster is bound by residues Cys137, Cys140, and Cys228.

Belongs to the TtcA family. Homodimer. The cofactor is Mg(2+). [4Fe-4S] cluster serves as cofactor.

Its subcellular location is the cytoplasm. The catalysed reaction is cytidine(32) in tRNA + S-sulfanyl-L-cysteinyl-[cysteine desulfurase] + AH2 + ATP = 2-thiocytidine(32) in tRNA + L-cysteinyl-[cysteine desulfurase] + A + AMP + diphosphate + H(+). It participates in tRNA modification. Its function is as follows. Catalyzes the ATP-dependent 2-thiolation of cytidine in position 32 of tRNA, to form 2-thiocytidine (s(2)C32). The sulfur atoms are provided by the cysteine/cysteine desulfurase (IscS) system. This chain is tRNA-cytidine(32) 2-sulfurtransferase, found in Brucella melitensis biotype 1 (strain ATCC 23456 / CCUG 17765 / NCTC 10094 / 16M).